The following is a 420-amino-acid chain: Bicoumarin synthase ktnC (420 aa).

Residue Cys362 coordinates heme.

It belongs to the cytochrome P450 family. Heme is required as a cofactor.

The catalysed reaction is 2 7-demethylsiderin + NADPH + O2 = orlandin + NADP(+) + 2 H2O. The protein operates within secondary metabolite biosynthesis. Non-reducing polyketide synthase; part of the gene cluster that mediates the biosynthesis of the bicoumarin kotanin. The non-reducing polyketide synthase ktnS first catalyzes the formation of the pentaketidic 4,7-dihydroxy-5-methylcoumarin from acetyl coenzyme A and 4 malonyl coenzyme A molecules. Further O-methylation by ktnB leads to the formation of 7-demethylsiderin. Then, an oxidative phenol coupling catalyzed by the cytochrome P450 monooxygenase ktnC forms the 8,8'-dimer P-orlandin via dimerization the monomeric precursor, 7-demethylsiderin. P-orlandin is subsequently O-methylated in a stepwise fashion to demethylkotanin and kotanin. The polypeptide is Bicoumarin synthase ktnC (Aspergillus niger (strain ATCC MYA-4892 / CBS 513.88 / FGSC A1513)).